Consider the following 295-residue polypeptide: Bifunctional protein FolD (295 aa).

NADP(+)-binding positions include 166–168, Ser-191, and Ile-232; that span reads GRS.

Belongs to the tetrahydrofolate dehydrogenase/cyclohydrolase family. Homodimer.

The enzyme catalyses (6R)-5,10-methylene-5,6,7,8-tetrahydrofolate + NADP(+) = (6R)-5,10-methenyltetrahydrofolate + NADPH. The catalysed reaction is (6R)-5,10-methenyltetrahydrofolate + H2O = (6R)-10-formyltetrahydrofolate + H(+). Its pathway is one-carbon metabolism; tetrahydrofolate interconversion. In terms of biological role, catalyzes the oxidation of 5,10-methylenetetrahydrofolate to 5,10-methenyltetrahydrofolate and then the hydrolysis of 5,10-methenyltetrahydrofolate to 10-formyltetrahydrofolate. In Rhodopseudomonas palustris (strain HaA2), this protein is Bifunctional protein FolD.